The primary structure comprises 618 residues: MRATAAYVGMLRLGRMCAGSPGVLGARAALSRSWQEARLQAVRFLSSREVDRMVPLPVGGLSYVQGCTKNHLLSKTVGRCLEATAQRVPEREALVDLHENIRLTFAQLKEEVDKAASGLLSIGLCKGDRLGMWGPNSYAWVLIQLATAQAGIILVSVNPAYQATELEYVLKKVGCKALVFPKQFKTQQYYNILKQICPEVENAQPGALKSQRLPDLTTVISVDAPLPGTLLLDEVLAAGSTQQHLEQLQHIQQFLSCHDPINIQFTSGTTGSPKGATLSHYNIVNNSSILGERLKLHEKTPEQLRMILPSPLYHCLGSVGGTMMCLMYGATLILASPVFNGKKALEAISRERGSFLYGTPTMFVDILNQPDFSSYDISTMRGGVIAGSPAPPELIRAIINKINMKDLVVAYGTTENSPVTFANFPEDTVEQKAESVGRIMPHTEARIMNMEAGMLAELNTPGELCIRGYCVMLGYWGEPQKTGEAVDQDKWYRTGDIATMNEQGFCKIVGRSKDMIIRGGENIYPAELEDFFHTHPKVQEVQVVGVKDDRMGEEICACIRLKDGEETTAEEMKAFCKGKISHFKIPRYIVFVTNYPLTTSGKIQKFKLREQMERHLNL.

Residues 1–44 constitute a mitochondrion transit peptide; sequence MRATAAYVGMLRLGRMCAGSPGVLGARAALSRSWQEARLQAVRF. An N6-acetyllysine modification is found at Lys-182. Lys-185 is subject to N6-acetyllysine; alternate. Lys-185 is modified (N6-succinyllysine; alternate). 266–274 is a binding site for ATP; sequence TSGTTGSPK. N6-acetyllysine is present on residues Lys-343 and Lys-401. At Lys-481 the chain carries N6-succinyllysine. Residues Asp-496 and Arg-511 each contribute to the ATP site. Lys-513 carries the post-translational modification N6-acetyllysine. N6-acetyllysine; alternate occurs at positions 547 and 573. Residues Lys-547 and Lys-573 each carry the N6-succinyllysine; alternate modification. Residue Lys-602 coordinates ATP. Lys-602 carries the N6-succinyllysine modification.

Belongs to the ATP-dependent AMP-binding enzyme family.

It localises to the mitochondrion. It catalyses the reaction a medium-chain fatty acid + ATP + CoA = a medium-chain fatty acyl-CoA + AMP + diphosphate. It carries out the reaction octanoate + ATP + CoA = octanoyl-CoA + AMP + diphosphate. Functionally, acyl-CoA synthases catalyze the initial reaction in fatty acid metabolism, by forming a thioester with CoA. Has some preference toward medium-chain substrates. Plays a role in adipocyte differentiation. In Macaca fascicularis (Crab-eating macaque), this protein is Medium-chain acyl-CoA ligase ACSF2, mitochondrial.